The sequence spans 265 residues: Mlc titration factor A (265 aa).

4 residues coordinate Zn(2+): His-111, His-148, His-152, and Glu-211.

The protein belongs to the MtfA family. In terms of assembly, interacts with Mlc with high affinity. Requires Zn(2+) as cofactor.

It is found in the cytoplasm. Its activity is regulated as follows. Proteolytic activity is stimulated by interaction with Mlc. Addition of the chelators EDTA or phenanthroline significantly reduces the peptidase activity, whereas the addition of other protease inhibitors has much less effect. Its function is as follows. Involved in the modulation of the activity of the glucose-phosphotransferase system (glucose-PTS). Interacts with the transcriptional repressor Mlc, preventing its interaction with DNA and leading to the modulation of expression of genes regulated by Mlc, including ptsG, which encodes the PTS system glucose-specific EIICB component. Functionally, shows zinc-dependent metallopeptidase activity. In vitro, can cleave several artificial substrates. The greatest activity and specificity is observed for L-alanine fused to 4-nitroanilide (L-alanine-pNA). Shows significantly lower activity towards L-arginine-pNA, L-proline-pNA, hippuryl-L-phenylalanine and hippuryl-L-arginine, and cannot use FTC-casein. Mlc does not appear to be a biologically relevant peptidase substrate. Biologically relevant targets may have a function in growth transition under changing environmental conditions. This chain is Mlc titration factor A, found in Escherichia coli (strain K12).